Here is a 1083-residue protein sequence, read N- to C-terminus: Solute carrier family 12 member 7 (1083 aa).

The disordered stretch occupies residues 1-51 (MPTNFTVVPVEARADGAGDEAAERTEEPGSPESADPACPTPGDGNPRENSP). Residues 1–119 (MPTNFTVVPV…RREIKAPRMG (119 aa)) lie on the Cytoplasmic side of the membrane. The span at 12 to 27 (ARADGAGDEAAERTEE) shows a compositional bias: basic and acidic residues. Phosphoserine is present on residues S30, S33, S50, and S62. The chain crosses the membrane as a discontinuously helical span at residues 120–142 (TFIGVYLPCLQNILGVILFLRLT). K(+) is bound by residues N131 and I132. V135 is a chloride binding site. The Extracellular segment spans residues 143-149 (WIVGAAG). The helical transmembrane segment at 150 to 172 (VLESFLIVAMCCTCTMLTAISMS) threads the bilayer. The Cytoplasmic portion of the chain corresponds to 173–196 (AIATNGVVPAGGSYYMISRSLGPE). The chain crosses the membrane as a helical span at residues 197–225 (FGGAVGLCFYLGTTFAGAMYILGTIEIFL). The Extracellular portion of the chain corresponds to 226–249 (TYISPSAAIFQAETADGEAAALLN). 2 consecutive transmembrane segments (helical) span residues 250-271 (NMRV…VGVK) and 272-300 (YVNK…KTAF). The Extracellular segment spans residues 301–419 (APPDIPVCLL…PYVLTDIMTY (119 aa)). 3 N-linked (GlcNAc...) asparagine glycosylation sites follow: N312, N331, and N360. The helical transmembrane segment at 420–440 (FTMLVGIYFPSVTGIMAGSNR) threads the bilayer. P429 and T432 together coordinate K(+). Chloride is bound at residue P429. Chloride is bound by residues G433 and I434. At 441 to 450 (SGDLKDAQKS) the chain is on the cytoplasmic side. The chain crosses the membrane as a helical span at residues 451 to 473 (IPTGTILAIVTTSFIYLSCIVLF). The Extracellular segment spans residues 474-504 (GACIEGVVLRDKFGEALQGNLVIGMLAWPSP). Residues 505–531 (WVIVIGSFFSTCGAGLQSLTGAPRLLQ) traverse the membrane as a helical segment. The Cytoplasmic portion of the chain corresponds to 532-554 (AIARDGIIPFLQVFGHGKANGEP). The next 2 membrane-spanning stretches (helical) occupy residues 555–573 (TWAL…LIAS) and 574–598 (LDSV…ACAV). Position 589 (Y589) interacts with chloride. The Cytoplasmic segment spans residues 599–612 (QTLLRTPNWRPRFK). 2 helical membrane-spanning segments follow: residues 613 to 635 (FYHW…ICSW) and 636 to 651 (YYAL…IYKY). At 652–1083 (IEYRGAEKEW…GGREVITIYS (432 aa)) the chain is on the cytoplasmic side. The tract at residues 664–680 (GIRGLSLNAARYALLRV) is scissor helix. T973 and T980 each carry phosphothreonine.

The protein belongs to the SLC12A transporter family. K/Cl co-transporter subfamily. In terms of assembly, homodimer; adopts a domain-swap conformation at the scissor helices connecting the transmembrane domain and C-terminal domain. Heterodimer with K-Cl cotransporter SLC12A5. As to expression, widely expressed with highest levels in kidney, liver and pancreas. Expressed in choroid plexus and suprachiasmatic nucleus.

It localises to the cell membrane. It catalyses the reaction K(+)(in) + chloride(in) = K(+)(out) + chloride(out). Activated by N-ethylmaleimide (NEM). Inhibited by furosemide, DIDS and bumetanide. The inhibition is much stronger in the presence of 50 mM K(+) in the uptake medium. Inhibited by DIOA. Inhibited by WNK3. Functionally, mediates electroneutral potassium-chloride cotransport when activated by cell swelling. May mediate K(+) uptake into Deiters' cells in the cochlea and contribute to K(+) recycling in the inner ear. Important for the survival of cochlear outer and inner hair cells and the maintenance of the organ of Corti. May be required for basolateral Cl(-) extrusion in the kidney and contribute to renal acidification. The protein is Solute carrier family 12 member 7 of Rattus norvegicus (Rat).